A 321-amino-acid chain; its full sequence is Glucokinase (321 aa).

Residue 8-13 (GDVGGT) participates in ATP binding.

This sequence belongs to the bacterial glucokinase family.

It localises to the cytoplasm. The enzyme catalyses D-glucose + ATP = D-glucose 6-phosphate + ADP + H(+). The protein is Glucokinase of Shigella sonnei (strain Ss046).